Reading from the N-terminus, the 882-residue chain is Nitrogen regulatory protein areA (882 aa).

Residues 1–13 (MSGLTLGGGGSGG) show a composition bias toward gly residues. Disordered regions lie at residues 1-75 (MSGL…PDSL), 139-191 (KRKE…LTSD), 228-257 (SRKD…SEFG), 325-344 (NNHS…FGLD), 394-422 (STDF…EHSM), 461-545 (NQDQ…DMNG), and 579-675 (MDTP…GPTT). The span at 48 to 59 (SDFSQLSDDFSF) shows a compositional bias: low complexity. Composition is skewed to polar residues over residues 156-169 (NSVS…QLTS) and 177-191 (PTRQ…LTSD). Residues 325-334 (NNHSSSHHNH) show a composition bias toward basic residues. Composition is skewed to polar residues over residues 394 to 413 (STDF…STPQ) and 492 to 503 (QVLNPNDFSTGA). The span at 604–613 (VRNREQDPRR) shows a compositional bias: basic and acidic residues. Polar residues predominate over residues 617-642 (ARTTSTPNTAQLLRQSMNANTSHTSP). Residues 676–700 (CTNCFTQTTPLWRRNPEGQPLCNAC) form a GATA-type zinc finger. The disordered stretch occupies residues 723–871 (RNRSSANSLA…NHSIAGGQGA (149 aa)). The segment covering 745–759 (KNSVQQTTVTTPTSS) has biased composition (low complexity). Positions 795–811 (NPTTSSPGQSRGTSSVQ) are enriched in polar residues. The span at 848–861 (ALAPAMPPAAANPA) shows a compositional bias: low complexity.

It is found in the nucleus. Functionally, major nitrogen regulatory protein. Positively acting regulatory gene of nitrogen metabolite repression. In Aspergillus niger, this protein is Nitrogen regulatory protein areA (areA).